A 370-amino-acid chain; its full sequence is Phospho-N-acetylmuramoyl-pentapeptide-transferase (370 aa).

The next 10 helical transmembrane spans lie at 3–23 (QIIIAGAVSFLVAIFTTPVLI), 54–74 (GLAILAGILVAYVVAGLYGLL), 79–99 (AFTASGLLVLGLTLGLGAVGF), 118–138 (AKLISQLVLALLFGFLVLRFP), 161–181 (LAVGGTVIGTIVFLIFMYILI), 197–217 (LAAGVTAIVMGSYSLMTFWQF), 238–258 (LAVLAAAGLGGCLGFLWWNAA), 262–282 (IFMGDTGSLALGGLVAGISVT), 290–310 (IIIGALFVIETVSVVIQIVVF), and 341–361 (FWLLAAMAAMAGVAIFYGDWL).

It belongs to the glycosyltransferase 4 family. MraY subfamily. Requires Mg(2+) as cofactor.

It is found in the cell membrane. It carries out the reaction UDP-N-acetyl-alpha-D-muramoyl-L-alanyl-gamma-D-glutamyl-meso-2,6-diaminopimeloyl-D-alanyl-D-alanine + di-trans,octa-cis-undecaprenyl phosphate = di-trans,octa-cis-undecaprenyl diphospho-N-acetyl-alpha-D-muramoyl-L-alanyl-D-glutamyl-meso-2,6-diaminopimeloyl-D-alanyl-D-alanine + UMP. It functions in the pathway cell wall biogenesis; peptidoglycan biosynthesis. Its function is as follows. Catalyzes the initial step of the lipid cycle reactions in the biosynthesis of the cell wall peptidoglycan: transfers peptidoglycan precursor phospho-MurNAc-pentapeptide from UDP-MurNAc-pentapeptide onto the lipid carrier undecaprenyl phosphate, yielding undecaprenyl-pyrophosphoryl-MurNAc-pentapeptide, known as lipid I. The chain is Phospho-N-acetylmuramoyl-pentapeptide-transferase from Corynebacterium aurimucosum (strain ATCC 700975 / DSM 44827 / CIP 107346 / CN-1) (Corynebacterium nigricans).